The primary structure comprises 260 residues: Transmembrane protein 106C (260 aa).

Residue Gly2 is the site of N-myristoyl glycine attachment. Residues 85 to 105 form a helical membrane-spanning segment; the sequence is YVLLSVLLCLLASGLVFFFLF. Asn171 carries an N-linked (GlcNAc...) asparagine glycan. A helical membrane pass occupies residues 196-216; that stretch reads SYVYFYCTLPAILVHNIVIFM.

Belongs to the TMEM106 family. Interacts with TMEM106B.

It is found in the endoplasmic reticulum membrane. The protein localises to the membrane. The polypeptide is Transmembrane protein 106C (Tmem106c) (Rattus norvegicus (Rat)).